A 495-amino-acid chain; its full sequence is Cobyric acid synthase (495 aa).

The region spanning 249-443 (EININVIRLP…LHGLFDNGAW (195 aa)) is the GATase cobBQ-type domain. The active-site Nucleophile is cysteine 330. Histidine 435 is a catalytic residue.

It belongs to the CobB/CobQ family. CobQ subfamily.

Its pathway is cofactor biosynthesis; adenosylcobalamin biosynthesis. In terms of biological role, catalyzes amidations at positions B, D, E, and G on adenosylcobyrinic A,C-diamide. NH(2) groups are provided by glutamine, and one molecule of ATP is hydrogenolyzed for each amidation. This Gloeothece citriformis (strain PCC 7424) (Cyanothece sp. (strain PCC 7424)) protein is Cobyric acid synthase.